We begin with the raw amino-acid sequence, 289 residues long: Cysteine-rich venom protein Mr30 (289 aa).

Positions 1–24 are cleaved as a signal peptide; that stretch reads MLSTMQTVGAILMLSIVFVAGTKR. The residue at position 33 (Glu33) is a 4-carboxyglutamate. The SCP domain occupies 62 to 184; that stretch reads VRMHNVIRAT…GEDRYFVCNY (123 aa).

It belongs to the CRISP family. Post-translationally, contains 11 disulfide bonds. As to expression, expressed by the venom duct.

It localises to the secreted. Functionally, has no proteolytic activity. In Conus marmoreus (Marble cone), this protein is Cysteine-rich venom protein Mr30.